The primary structure comprises 585 residues: Formate--tetrahydrofolate ligase (585 aa).

An ATP-binding site is contributed by 65-72; that stretch reads TPHGEGKT.

This sequence belongs to the formate--tetrahydrofolate ligase family.

The enzyme catalyses (6S)-5,6,7,8-tetrahydrofolate + formate + ATP = (6R)-10-formyltetrahydrofolate + ADP + phosphate. It participates in one-carbon metabolism; tetrahydrofolate interconversion. The polypeptide is Formate--tetrahydrofolate ligase (Shewanella baltica (strain OS195)).